A 788-amino-acid chain; its full sequence is Ciliated left-right organizer metallopeptidase (788 aa).

The signal sequence occupies residues 1-20; it reads MLLLLLLLLLLPPLVLRVAA. At 21 to 735 the chain is on the extracellular side; the sequence is SRCLHDETQK…DHNPSMTHLR (715 aa). A compositionally biased stretch (low complexity) spans 40-56; the sequence is SQLPSKSRSSSLTLPSS. The disordered stretch occupies residues 40–59; sequence SQLPSKSRSSSLTLPSSRDP. Zn(2+) is bound at residue histidine 305. Residue glutamate 306 is part of the active site. Residue histidine 309 participates in Zn(2+) binding. A glycan (N-linked (GlcNAc...) asparagine) is linked at asparagine 333. Residue histidine 385 participates in Zn(2+) binding. N-linked (GlcNAc...) asparagine glycosylation is found at asparagine 425, asparagine 491, asparagine 524, and asparagine 713. A helical transmembrane segment spans residues 736 to 756; that stretch reads LSMGLCLMLLILVGVMGTTAY. Residues 757–788 lie on the Cytoplasmic side of the membrane; that stretch reads QKRATLPVRPSASYHSPELHSTRVPVRGIREV. The tract at residues 767-788 is disordered; that stretch reads SASYHSPELHSTRVPVRGIREV.

It belongs to the peptidase M8 family. Requires Zn(2+) as cofactor.

Its subcellular location is the membrane. Putative metalloproteinase that plays a role in left-right patterning process. This Homo sapiens (Human) protein is Ciliated left-right organizer metallopeptidase.